A 376-amino-acid polypeptide reads, in one-letter code: E3 ubiquitin-protein ligase RNF34 (376 aa).

The FYVE-type zinc finger occupies 56 to 107 (EGPNIVCKACGLSFSVFRKKHVCCDCKKDFCSLCSVSQENLRRCSTCHLLQE). Residues 115-134 (LMRLKVKDLRQYLLLRNIPT) form the SAP 1 domain. Residue S169 is modified to Phosphoserine. Residues 216–256 (IASANTDDDDDDDDDDDDDEDDDDEQEEEEQNPGLSKKKAR) are disordered. Over residues 221–246 (TDDDDDDDDDDDDDEDDDDEQEEEEQ) the composition is skewed to acidic residues. Phosphoserine occurs at positions 258 and 260. One can recognise an SAP 2 domain in the interval 268–282 (VEGMSVRQLKEILAR). The RING-type zinc-finger motif lies at 329-364 (CRICMDAVIDCVLLECGHMVTCTKCGKRMSECPICR).

Interacts with CASP8 and CASP10. Interacts with p53/TP53; involved in p53/TP53 ubiquitination. Interacts (via RING-type zinc finger) with MDM2; the interaction stabilizes MDM2. Interacts (via RING-type zinc finger) with PPARGC1A. Interacts with NOD1. In terms of processing, autoubiquitinated (in vitro). Proteolytically cleaved by caspases upon induction of apoptosis by TNF.

It localises to the cell membrane. It is found in the endomembrane system. Its subcellular location is the nucleus. The protein localises to the nucleus speckle. The protein resides in the cytoplasm. It localises to the cytosol. The catalysed reaction is S-ubiquitinyl-[E2 ubiquitin-conjugating enzyme]-L-cysteine + [acceptor protein]-L-lysine = [E2 ubiquitin-conjugating enzyme]-L-cysteine + N(6)-ubiquitinyl-[acceptor protein]-L-lysine.. It participates in protein modification; protein ubiquitination. In terms of biological role, E3 ubiquitin-protein ligase that regulates several biological processes through the ubiquitin-mediated proteasomal degradation of various target proteins. Ubiquitinates the caspases CASP8 and CASP10, promoting their proteasomal degradation, to negatively regulate cell death downstream of death domain receptors in the extrinsic pathway of apoptosis. May mediate 'Lys-48'-linked polyubiquitination of RIPK1 and its subsequent proteasomal degradation thereby indirectly regulating the tumor necrosis factor-mediated signaling pathway. Negatively regulates p53/TP53 through its direct ubiquitination and targeting to proteasomal degradation. Indirectly, may also negatively regulate p53/TP53 through ubiquitination and degradation of SFN. Mediates PPARGC1A proteasomal degradation probably through ubiquitination thereby indirectly regulating the metabolism of brown fat cells. Possibly involved in innate immunity, through 'Lys-48'-linked polyubiquitination of NOD1 and its subsequent proteasomal degradation. The protein is E3 ubiquitin-protein ligase RNF34 of Mus musculus (Mouse).